Consider the following 541-residue polypeptide: T-complex protein 1 subunit epsilon (541 aa).

An N-acetylalanine modification is found at A2. K20 is covalently cross-linked (Glycyl lysine isopeptide (Lys-Gly) (interchain with G-Cter in SUMO2)). S26 carries the phosphoserine modification. Position 53 (G53) interacts with ADP. G53 is an ATP binding site. D104 is a binding site for Mg(2+). Positions 105, 106, 107, and 175 each coordinate ADP. ATP contacts are provided by T106 and T107. Glycyl lysine isopeptide (Lys-Gly) (interchain with G-Cter in SUMO2) cross-links involve residues K210, K214, K265, K275, and K279. S346 is subject to Phosphoserine. Residue K392 forms a Glycyl lysine isopeptide (Lys-Gly) (interchain with G-Cter in SUMO2) linkage. ADP is bound by residues G422, D492, E508, and K513. G422 serves as a coordination point for ATP. S539 carries the phosphoserine modification.

Belongs to the TCP-1 chaperonin family. As to quaternary structure, component of the chaperonin-containing T-complex (TRiC), a hexadecamer composed of two identical back-to-back stacked rings enclosing a protein folding chamber. Each ring is made up of eight different subunits: TCP1/CCT1, CCT2, CCT3, CCT4, CCT5, CCT6A/CCT6, CCT7, CCT8. Interacts with PACRG. Interacts with DNAAF4. Interacts with DLEC1. Interacts with SPMAP2. Ubiquitinated by the DCX(DCAF12) complex specifically recognizes the diglutamate (Glu-Glu) at the C-terminus, leading to its degradation.

It localises to the cytoplasm. The protein resides in the cytoskeleton. It is found in the microtubule organizing center. The protein localises to the centrosome. It catalyses the reaction ATP + H2O = ADP + phosphate + H(+). Its function is as follows. Component of the chaperonin-containing T-complex (TRiC), a molecular chaperone complex that assists the folding of actin, tubulin and other proteins upon ATP hydrolysis. The TRiC complex mediates the folding of WRAP53/TCAB1, thereby regulating telomere maintenance. As part of the TRiC complex may play a role in the assembly of BBSome, a complex involved in ciliogenesis regulating transports vesicles to the cilia. This chain is T-complex protein 1 subunit epsilon (CCT5), found in Pongo abelii (Sumatran orangutan).